The chain runs to 92 residues: N(2)-fixation sustaining protein CowN (92 aa).

This sequence belongs to the CowN family.

Is required to sustain N(2)-dependent growth in the presence of low levels of carbon monoxide (CO). Probably acts by protecting the N(2) fixation ability of the nitrogenase complex, which is inactivated in the presence of CO. This Rhodopseudomonas palustris (strain ATCC BAA-98 / CGA009) protein is N(2)-fixation sustaining protein CowN.